The following is a 264-amino-acid chain: S-adenosylmethionine decarboxylase proenzyme (264 aa).

Serine 112 functions as the Schiff-base intermediate with substrate; via pyruvic acid in the catalytic mechanism. Position 112 is a pyruvic acid (Ser); by autocatalysis (serine 112). Catalysis depends on histidine 117, which acts as the Proton acceptor; for processing activity. The active-site Proton donor; for catalytic activity is cysteine 140.

Belongs to the prokaryotic AdoMetDC family. Type 2 subfamily. In terms of assembly, heterooctamer of four alpha and four beta chains arranged as a tetramer of alpha/beta heterodimers. Requires pyruvate as cofactor. Post-translationally, is synthesized initially as an inactive proenzyme. Formation of the active enzyme involves a self-maturation process in which the active site pyruvoyl group is generated from an internal serine residue via an autocatalytic post-translational modification. Two non-identical subunits are generated from the proenzyme in this reaction, and the pyruvate is formed at the N-terminus of the alpha chain, which is derived from the carboxyl end of the proenzyme. The post-translation cleavage follows an unusual pathway, termed non-hydrolytic serinolysis, in which the side chain hydroxyl group of the serine supplies its oxygen atom to form the C-terminus of the beta chain, while the remainder of the serine residue undergoes an oxidative deamination to produce ammonia and the pyruvoyl group blocking the N-terminus of the alpha chain.

The enzyme catalyses S-adenosyl-L-methionine + H(+) = S-adenosyl 3-(methylsulfanyl)propylamine + CO2. It participates in amine and polyamine biosynthesis; S-adenosylmethioninamine biosynthesis; S-adenosylmethioninamine from S-adenosyl-L-methionine: step 1/1. Its function is as follows. Catalyzes the decarboxylation of S-adenosylmethionine to S-adenosylmethioninamine (dcAdoMet), the propylamine donor required for the synthesis of the polyamines spermine and spermidine from the diamine putrescine. This Escherichia coli O127:H6 (strain E2348/69 / EPEC) protein is S-adenosylmethionine decarboxylase proenzyme.